Here is a 184-residue protein sequence, read N- to C-terminus: Large ribosomal subunit protein bL9 (184 aa).

A disordered region spans residues 160-184; that stretch reads LQNQKSEQQEAEQDANKEAADGDDS. A compositionally biased stretch (basic and acidic residues) spans 173 to 184; the sequence is DANKEAADGDDS.

Belongs to the bacterial ribosomal protein bL9 family.

In terms of biological role, binds to the 23S rRNA. The protein is Large ribosomal subunit protein bL9 of Wolbachia sp. subsp. Drosophila simulans (strain wRi).